The following is a 334-amino-acid chain: Malate dehydrogenase, mitochondrial (334 aa).

Residues 1-17 constitute a mitochondrion transit peptide; the sequence is MLSRVAKRAFSSTVANP. NAD(+) contacts are provided by residues 24 to 30 and Asp50; that span reads GAGGGIG. The substrate site is built by Arg99 and Arg105. NAD(+)-binding positions include Asn112 and 135–137; that span reads ISN. Residues Asn137 and Arg171 each coordinate substrate. Ser177 is subject to Phosphoserine. Residue His195 is the Proton acceptor of the active site. Thr199 carries the phosphothreonine modification. Met245 serves as a coordination point for NAD(+).

Belongs to the LDH/MDH superfamily. MDH type 1 family. In terms of assembly, homodimer.

Its subcellular location is the mitochondrion matrix. The catalysed reaction is (S)-malate + NAD(+) = oxaloacetate + NADH + H(+). This chain is Malate dehydrogenase, mitochondrial (MDH1), found in Saccharomyces cerevisiae (strain ATCC 204508 / S288c) (Baker's yeast).